The primary structure comprises 322 residues: MSQWFNQFYAAIAQSPLSHWLETLPAQLKHWQLEASHGDLPQWQKVLKNLPEVKTQHVDITSQVKIGTPGEMTDGEQKQTLHLLKRMMPWRKGPFSVHGIEIDTEWRSDWKWDRLLPHIEPLKGRTVLDIGCGSGYHLWRMRGEGAQFVVGIDPSDLFLCQFQAIKHFNPDENVHLLPLGVEALPELKAFDTVFSMGVLYHRRSPIDFLAQLKAQLRPGGELVLETLVIEGDENTVLVPTDRYAKMRNVWFIPSTAALKLWMERVGFKNVQIKDCAITTLDEQRKTAWMENESLVDFLDPNDTSKTIEGYPAPLRAILTAKA.

Residues Lys92, Trp106, Lys111, Gly131, 153 to 155, 181 to 182, Met196, Tyr200, and Arg315 contribute to the carboxy-S-adenosyl-L-methionine site; these read DPS and VE.

This sequence belongs to the class I-like SAM-binding methyltransferase superfamily. CmoB family. Homotetramer.

The enzyme catalyses carboxy-S-adenosyl-L-methionine + 5-hydroxyuridine(34) in tRNA = 5-carboxymethoxyuridine(34) in tRNA + S-adenosyl-L-homocysteine + H(+). In terms of biological role, catalyzes carboxymethyl transfer from carboxy-S-adenosyl-L-methionine (Cx-SAM) to 5-hydroxyuridine (ho5U) to form 5-carboxymethoxyuridine (cmo5U) at position 34 in tRNAs. This chain is tRNA U34 carboxymethyltransferase, found in Pseudoalteromonas translucida (strain TAC 125).